Here is a 425-residue protein sequence, read N- to C-terminus: Gamma-glutamyl phosphate reductase (425 aa).

The protein belongs to the gamma-glutamyl phosphate reductase family.

Its subcellular location is the cytoplasm. The enzyme catalyses L-glutamate 5-semialdehyde + phosphate + NADP(+) = L-glutamyl 5-phosphate + NADPH + H(+). It functions in the pathway amino-acid biosynthesis; L-proline biosynthesis; L-glutamate 5-semialdehyde from L-glutamate: step 2/2. In terms of biological role, catalyzes the NADPH-dependent reduction of L-glutamate 5-phosphate into L-glutamate 5-semialdehyde and phosphate. The product spontaneously undergoes cyclization to form 1-pyrroline-5-carboxylate. The chain is Gamma-glutamyl phosphate reductase from Aromatoleum aromaticum (strain DSM 19018 / LMG 30748 / EbN1) (Azoarcus sp. (strain EbN1)).